The following is a 1563-amino-acid chain: Superkiller complex protein 3 (1563 aa).

Ser-2 is subject to N-acetylserine. TPR repeat units lie at residues 6 to 39 (VKTA…EKNN), 40 to 73 (YNAW…EPEQ), 157 to 196 (YELW…ADNI), 272 to 305 (GPGL…SPVC), 307 to 339 (AGWC…IDNF), 386 to 419 (PGLL…YPDL), 420 to 453 (AEAH…DAEV), 455 to 492 (EYHY…DAHM), 493 to 527 (GKVF…DDND), 564 to 597 (KWAW…DPKD), 598 to 631 (CNCW…NPDS), 632 to 665 (TYSV…KEDY), 633 to 665 (YSVF…KEDY), 673 to 713 (GECH…RADV), 790 to 824 (VQHL…DSNN), 826 to 860 (LHWN…EQIN), 861 to 894 (AAAW…DPSY), 980 to 1013 (ASAF…LHSA), 1020 to 1053 (NVAV…ELED), 1055 to 1084 (IGFA…CKSE), 1325 to 1358 (KWSF…NPDQ), and 1399 to 1432 (VPAW…ASQQ).

This sequence belongs to the SKI3 family. As to quaternary structure, component of the SKI complex which consists of SKIC2, SKIC3 and SKIC8. Interacts with PAF1.

The protein localises to the cytoplasm. The protein resides in the nucleus. In terms of biological role, component of the SKI complex, a multiprotein complex that assists the RNA-degrading exosome during the mRNA decay and quality-control pathways. The SKI complex catalyzes mRNA extraction from 80S ribosomal complexes in the 3'-5' direction and channels mRNA to the cytosolic exosome for degradation. SKI-mediated extraction of mRNA from stalled ribosomes allow binding of the Pelota-HBS1L complex and subsequent ribosome disassembly by ABCE1 for ribosome recycling. In the nucleus, the SKI complex associates with transcriptionally active genes in a manner dependent on PAF1 complex (PAF1C). The chain is Superkiller complex protein 3 from Mus musculus (Mouse).